The chain runs to 219 residues: Ribose-5-phosphate isomerase A (219 aa).

Substrate is bound by residues 28-31, 81-84, and 94-97; these read TGST, DGAD, and KGGG. Glu103 acts as the Proton acceptor in catalysis. Lys121 lines the substrate pocket.

The protein belongs to the ribose 5-phosphate isomerase family. As to quaternary structure, homodimer.

It carries out the reaction aldehydo-D-ribose 5-phosphate = D-ribulose 5-phosphate. Its pathway is carbohydrate degradation; pentose phosphate pathway; D-ribose 5-phosphate from D-ribulose 5-phosphate (non-oxidative stage): step 1/1. In terms of biological role, catalyzes the reversible conversion of ribose-5-phosphate to ribulose 5-phosphate. This Methylibium petroleiphilum (strain ATCC BAA-1232 / LMG 22953 / PM1) protein is Ribose-5-phosphate isomerase A.